A 208-amino-acid chain; its full sequence is Peroxiredoxin (208 aa).

The Thioredoxin domain occupies 2-156 (PLLGDDFPQL…IVRAVKALQT (155 aa)). C44 acts as the Cysteine sulfenic acid (-SOH) intermediate in catalysis. A substrate-binding site is contributed by R119.

This sequence belongs to the peroxiredoxin family. Prx6 subfamily. As to quaternary structure, homodecamer. Pentamer of dimers that assemble into a ring structure.

It localises to the cytoplasm. The catalysed reaction is a hydroperoxide + [thioredoxin]-dithiol = an alcohol + [thioredoxin]-disulfide + H2O. Functionally, thiol-specific peroxidase that catalyzes the reduction of hydrogen peroxide and organic hydroperoxides to water and alcohols, respectively. Plays a role in cell protection against oxidative stress by detoxifying peroxides. The protein is Peroxiredoxin of Treponema denticola (strain ATCC 35405 / DSM 14222 / CIP 103919 / JCM 8153 / KCTC 15104).